Here is a 314-residue protein sequence, read N- to C-terminus: NF-kappa-B inhibitor alpha (314 aa).

Residues 1 to 41 (MFQPAEPGQEWAMEGPRDALKKERLLDDRHDSGLDSMKDEE) form a disordered region. The span at 15 to 41 (GPRDALKKERLLDDRHDSGLDSMKDEE) shows a compositional bias: basic and acidic residues. Lysine 21 is covalently cross-linked (Glycyl lysine isopeptide (Lys-Gly) (interchain with G-Cter in SUMO); alternate). Residue lysine 21 forms a Glycyl lysine isopeptide (Lys-Gly) (interchain with G-Cter in ubiquitin); alternate linkage. Residue lysine 22 forms a Glycyl lysine isopeptide (Lys-Gly) (interchain with G-Cter in ubiquitin) linkage. The Destruction motif signature appears at 30 to 36 (HDSGLDS). Residue serine 32 is modified to Phosphoserine; by IKKA and IKKB. A Phosphoserine; by IKKA, IKKB, IKKE and TBK1 modification is found at serine 36. The residue at position 42 (tyrosine 42) is a Phosphotyrosine; by Tyr-kinases. Positions 45 to 54 (MVKELREIRL) match the Nuclear export signal motif. The short motif at 110 to 120 (LQQTPLHLAVI) is the Nuclear import signal element. ANK repeat units lie at residues 110-139 (LQQTPLHLAVITNQPEIAEALLEAGCDPEL), 143-172 (RGNTPLHLACEQGCLASVGVLTQPRGTQHL), 182-211 (NGHTCLHLASIHGYLGIVELLVSLGADVNA), and 216-245 (NGRTALHLAVDLQNPDLVSLLLKCGADVNR). Residues asparagine 210 and asparagine 244 each carry the (3S)-3-hydroxyasparagine; by HIF1AN modification. Serine 283 and serine 288 each carry phosphoserine; by CK2. Threonine 291 bears the Phosphothreonine; by CK2 mark. Serine 293 is modified (phosphoserine; by CK2). Threonine 296 carries the post-translational modification Phosphothreonine.

The protein belongs to the NF-kappa-B inhibitor family. In terms of assembly, interacts with RELA; the interaction requires the nuclear import signal. Part of a 70-90 kDa complex at least consisting of CHUK, IKBKB, NFKBIA, RELA, ELP1 and MAP3K14. Interacts with NKIRAS1 and NKIRAS2. Interacts with RWDD3; the interaction enhances sumoylation. Interacts with PRMT2. Interacts with PRKACA in platelets; this interaction is disrupted by thrombin and collagen. Interacts with MEFV. Interacts with DDRGK1; positively regulates NFKBIA phosphorylation and degradation. Interacts with HNRNPA2B1; the interaction may be mediated by the RRM2 domain of HNRNPA2B1, and HNRNPA2B1 may interact simultaneously with FAM76B and either NFKBIA or NFKBIE to form a complex. Phosphorylated at Ser-32 and Ser-36 by IKKA/CHUK and IKKB/IKBKB; disables inhibition of NF-kappa-B DNA-binding activity. Phosphorylation at positions 32 and 36 is prerequisite to recognition by the SCF(FBXW11) and SCF(BTRC) complexes, leading to polyubiquitination and subsequent degradation. In terms of processing, polyubiquitinated at Lys-21 and/or Lys-22 following phosphorylation at Ser-32 and Ser-36. Monoubiquitinated at Lys-21 and/or Lys-22 by UBE2D3. Ubiquitin chain elongation is then performed by CDC34 in cooperation with the SCF(FBXW11) E3 ligase complex, building ubiquitin chains from the UBE2D3-primed NFKBIA-linked ubiquitin. The resulting polyubiquitination leads to protein degradation. Also ubiquitinated by the SCF(BTRC) complex following stimulus-dependent phosphorylation at Ser-32 and Ser-36. Deubiquitinated by USP38, leading to NF-kappa-B inhibition. Post-translationally, sumoylated; sumoylation requires the presence of the nuclear import signal. Sumoylation blocks ubiquitination and proteasome-mediated degradation of the protein thereby increasing the protein stability. Hydroxylated by HIF1AN.

The protein resides in the cytoplasm. The protein localises to the nucleus. In terms of biological role, inhibits the activity of dimeric NF-kappa-B/REL complexes by trapping REL (RELA/p65 and NFKB1/p50) dimers in the cytoplasm by masking their nuclear localization signals. On cellular stimulation by immune and pro-inflammatory responses, becomes phosphorylated promoting ubiquitination and degradation, enabling the dimeric RELA to translocate to the nucleus and activate transcription. This Sus scrofa (Pig) protein is NF-kappa-B inhibitor alpha (NFKBIA).